The primary structure comprises 344 residues: Succinylglutamate desuccinylase (344 aa).

His-63, Glu-66, and His-160 together coordinate Zn(2+). The active site involves Glu-224.

Belongs to the AspA/AstE family. Succinylglutamate desuccinylase subfamily. Requires Zn(2+) as cofactor.

It carries out the reaction N-succinyl-L-glutamate + H2O = L-glutamate + succinate. Its pathway is amino-acid degradation; L-arginine degradation via AST pathway; L-glutamate and succinate from L-arginine: step 5/5. Functionally, transforms N(2)-succinylglutamate into succinate and glutamate. This Shewanella sp. (strain MR-4) protein is Succinylglutamate desuccinylase.